The primary structure comprises 737 residues: Genome polyprotein (737 aa).

Serine 2 bears the N-acetylserine; by host mark. Residues 2–23 form an interaction with STAT1 region; that stretch reads STNPKPQRKTKRNTNRRPQDVK. The tract at residues 2–58 is interaction with EIF2AK2/PKR; it reads STNPKPQRKTKRNTNRRPQDVKFPGGGQIVGGVYLLPRRGPRLGVRATRKTSERSQP. Positions 2–59 are interaction with DDX3X; the sequence is STNPKPQRKTKRNTNRRPQDVKFPGGGQIVGGVYLLPRRGPRLGVRATRKTSERSQPR. Residues 2-75 are disordered; that stretch reads STNPKPQRKT…PKDRRSTGKS (74 aa). The Cytoplasmic portion of the chain corresponds to 2-168; sequence STNPKPQRKT…EDGINYATGN (167 aa). 2 consecutive short sequence motifs (nuclear localization signal) follow at residues 5 to 13 and 38 to 43; these read PKPQRKTKR and PRRGPR. Positions 7-16 are enriched in basic residues; that stretch reads PQRKTKRNTN. Low complexity predominate over residues 32–47; it reads GGVYLLPRRGPRLGVR. Serine 53 carries the post-translational modification Phosphoserine; by host. Short sequence motifs (nuclear localization signal) lie at residues 58-64 and 66-71; these read PRGRRQP and PKDRRS. 2 positions are modified to phosphoserine; by host: serine 99 and serine 116. The interval 112–152 is important for endoplasmic reticulum and mitochondrial localization; that stretch reads PRHRSRNLGKVIDTLTCGFADLMGYIPVVGAPVGGVARALA. An interaction with APOA2 region spans residues 122-173; sequence VIDTLTCGFADLMGYIPVVGAPVGGVARALAHGVRVLEDGINYATGNLPGCS. The tract at residues 164 to 167 is important for lipid droplets localization; it reads YATG. A helical transmembrane segment spans residues 169–189; sequence LPGCSFSIFLLALLSCVTVPV. Positions 178–191 are cleaved as a propeptide — ER anchor for the core protein, removed in mature form by host signal peptidase; it reads LLALLSCVTVPVSA. Residues 190-358 are Lumenal-facing; the sequence is SAVEVRNISS…FGGHWGVVFG (169 aa). Asparagine 196, asparagine 209, and asparagine 233 each carry an N-linked (GlcNAc...) asparagine; by host glycan. The interval 265 to 296 is important for fusion; it reads IVMAATVCSALYVGDICGAVMIASQAFIISPE. N-linked (GlcNAc...) asparagine; by host glycosylation is present at asparagine 305. A helical membrane pass occupies residues 359-379; the sequence is LAYFSMQGAWAKVIAILLLVA. Residues 380–729 lie on the Lumenal side of the membrane; the sequence is GVDASTQVTG…WEWVILLFLL (350 aa). The tract at residues 385 to 411 is HVR1; the sequence is TQVTGGQAAHTVRGVASIFSPGSRQDI. N-linked (GlcNAc...) (high mannose) asparagine; by host glycosylation is found at asparagine 417, asparagine 423, asparagine 430, and asparagine 448. 4 cysteine pairs are disulfide-bonded: cysteine 429-cysteine 554, cysteine 452-cysteine 459, cysteine 488-cysteine 496, and cysteine 505-cysteine 510. Positions 474 to 481 are HVR2; sequence YETNVTNE. Residues 482–495 are CD81-binding 1; it reads EDMRPYCWHYPPKP. N-linked (GlcNAc...) asparagine; by host glycosylation is present at asparagine 542. The interval 546-553 is CD81-binding 2; that stretch reads PPRGAWFG. Asparagine 558 is a glycosylation site (N-linked (GlcNAc...) (high mannose) asparagine; by host). 4 cysteine pairs are disulfide-bonded: cysteine 566–cysteine 571, cysteine 585–cysteine 589, cysteine 601–cysteine 624, and cysteine 611–cysteine 648. N-linked (GlcNAc...) (high mannose) asparagine; by host glycosylation is found at asparagine 627 and asparagine 649. Cysteine 656 and cysteine 681 are oxidised to a cystine. Residues 664-675 are PKR/eIF2-alpha phosphorylation homology domain (PePHD); it reads SQQSPLLHSTTE. A helical transmembrane segment spans residues 730–737; it reads LADARVCA.

It belongs to the hepacivirus polyprotein family. As to quaternary structure, homooligomer. Interacts with E1 (via C-terminus). Interacts with the non-structural protein 5A. Interacts (via N-terminus) with host STAT1 (via SH2 domain); this interaction results in decreased STAT1 phosphorylation and ubiquitin-mediated proteasome-dependent STAT1 degradation, leading to decreased IFN-stimulated gene transcription. Interacts with host STAT3; this interaction constitutively activates STAT3. Interacts with host LTBR receptor. Interacts with host TNFRSF1A receptor and possibly induces apoptosis. Interacts with host HNRPK. Interacts with host YWHAE. Interacts with host UBE3A/E6AP. Interacts with host DDX3X. Interacts with host APOA2. Interacts with host RXRA protein. Interacts with host SP110 isoform 3/Sp110b; this interaction sequesters the transcriptional corepressor SP110 away from the nucleus. Interacts with host CREB3 nuclear transcription protein; this interaction triggers cell transformation. Interacts with host ACY3. Interacts with host C1QR1. Interacts with host RBM24; this interaction, which enhances the interaction of the mature core protein with 5'-UTR, may inhibit viral translation and favor replication. Interacts with host EIF2AK2/PKR; this interaction induces the autophosphorylation of EIF2AK2. Part of the viral assembly initiation complex composed of NS2, E1, E2, NS3, NS4A, NS5A and the mature core protein. Forms a heterodimer with envelope glycoprotein E2. Interacts with mature core protein. Interacts with protease NS2. The heterodimer E1/E2 interacts with host CLDN1; this interaction plays a role in viral entry into host cell. Interacts with host SPSB2 (via C-terminus). Part of the viral assembly initiation complex composed of NS2, E1, E2, NS3, NS4A, NS5A and the mature core protein. In terms of assembly, forms a heterodimer with envelope glycoprotein E1. Interacts with host CD81 and SCARB1 receptors; these interactions play a role in viral entry into host cell. Interacts with host EIF2AK2/PKR; this interaction inhibits EIF2AK2 and probably allows the virus to evade the innate immune response. Interacts with host CD209/DC-SIGN and CLEC4M/DC-SIGNR. Interact with host SPCS1; this interaction is essential for viral particle assembly. Interacts with protease NS2. The heterodimer E1/E2 interacts with host CLDN1; this interaction plays a role in viral entry into host cell. Part of the viral assembly initiation complex composed of NS2, E1, E2, NS3, NS4A, NS5A and the mature core protein. In terms of processing, specific enzymatic cleavages in vivo yield mature proteins. The structural proteins, core, E1, E2 and p7 are produced by proteolytic processing by host signal peptidases. The core protein precursor is synthesized as a 23 kDa, which is retained in the ER membrane through the hydrophobic signal peptide. Cleavage by the signal peptidase releases the 21 kDa mature core protein. The cleavage of the core protein precursor occurs between aminoacids 176 and 188 but the exact cleavage site is not known. Some degraded forms of the core protein appear as well during the course of infection. The other proteins (p7, NS2, NS3, NS4A, NS4B, NS5A and NS5B) are cleaved by the viral proteases. Autoprocessing between NS2 and NS3 is mediated by the NS2 cysteine protease catalytic domain and regulated by the NS3 N-terminal domain. Phosphorylated by host PKC and PKA. Post-translationally, ubiquitinated; mediated by UBE3A and leading to core protein subsequent proteasomal degradation. In terms of processing, highly N-glycosylated.

The protein localises to the host endoplasmic reticulum membrane. The protein resides in the host mitochondrion membrane. It is found in the virion. Its subcellular location is the host cytoplasm. It localises to the host nucleus. The protein localises to the host lipid droplet. The protein resides in the virion membrane. Packages viral RNA to form a viral nucleocapsid, and promotes virion budding. Participates in the viral particle production as a result of its interaction with the non-structural protein 5A. Binds RNA and may function as a RNA chaperone to induce the RNA structural rearrangements taking place during virus replication. Modulates viral translation initiation by interacting with viral IRES and 40S ribosomal subunit. Affects various cell signaling pathways, host immunity and lipid metabolism. Prevents the establishment of cellular antiviral state by blocking the interferon-alpha/beta (IFN-alpha/beta) and IFN-gamma signaling pathways and by blocking the formation of phosphorylated STAT1 and promoting ubiquitin-mediated proteasome-dependent degradation of STAT1. Activates STAT3 leading to cellular transformation. Regulates the activity of cellular genes, including c-myc and c-fos. May repress the promoter of p53, and sequester CREB3 and SP110 isoform 3/Sp110b in the cytoplasm. Represses cell cycle negative regulating factor CDKN1A, thereby interrupting an important check point of normal cell cycle regulation. Targets transcription factors involved in the regulation of inflammatory responses and in the immune response: suppresses TNF-induced NF-kappa-B activation, and activates AP-1. Binds to dendritic cells (DCs) via C1QR1, resulting in down-regulation of T-lymphocytes proliferation. Alters lipid metabolism by interacting with hepatocellular proteins involved in lipid accumulation and storage. Induces up-regulation of FAS promoter activity, and thereby contributes to the increased triglyceride accumulation in hepatocytes (steatosis). In terms of biological role, forms a heterodimer with envelope glycoprotein E2, which mediates virus attachment to the host cell, virion internalization through clathrin-dependent endocytosis and fusion with host membrane. Fusion with the host cell is most likely mediated by both E1 and E2, through conformational rearrangements of the heterodimer required for fusion rather than a classical class II fusion mechanism. E1/E2 heterodimer binds host apolipoproteins such as APOB and ApoE thereby forming a lipo-viro-particle (LVP). APOE associated to the LVP allows the initial virus attachment to cell surface receptors such as the heparan sulfate proteoglycans (HSPGs), syndecan-1 (SDC1), syndecan-1 (SDC2), the low-density lipoprotein receptor (LDLR) and scavenger receptor class B type I (SCARB1). The cholesterol transfer activity of SCARB1 allows E2 exposure and binding of E2 to SCARB1 and the tetraspanin CD81. E1/E2 heterodimer binding on CD81 activates the epithelial growth factor receptor (EGFR) signaling pathway. Diffusion of the complex E1-E2-EGFR-SCARB1-CD81 to the cell lateral membrane allows further interaction with Claudin 1 (CLDN1) and occludin (OCLN) to finally trigger HCV entry. Functionally, forms a heterodimer with envelope glycoprotein E1, which mediates virus attachment to the host cell, virion internalization through clathrin-dependent endocytosis and fusion with host membrane. Fusion with the host cell is most likely mediated by both E1 and E2, through conformational rearrangements of the heterodimer required for fusion rather than a classical class II fusion mechanism. The interaction between envelope glycoprotein E2 and host apolipoprotein E/APOE allows the proper assembly, maturation and infectivity of the viral particles. This interaction is probably promoted via the up-regulation of cellular autophagy by the virus. E1/E2 heterodimer binds host apolipoproteins such as APOB and APOE thereby forming a lipo-viro-particle (LVP). APOE associated to the LVP allows the initial virus attachment to cell surface receptors such as the heparan sulfate proteoglycans (HSPGs), syndecan-1 (SDC1), syndecan-1 (SDC2), the low-density lipoprotein receptor (LDLR) and scavenger receptor class B type I (SCARB1). The cholesterol transfer activity of SCARB1 allows E2 exposure and binding of E2 to SCARB1 and the tetraspanin CD81. E1/E2 heterodimer binding on CD81 activates the epithelial growth factor receptor (EGFR) signaling pathway. Diffusion of the complex E1-E2-EGFR-SCARB1-CD81 to the cell lateral membrane allows further interaction with Claudin 1 (CLDN1) and occludin (OCLN) to finally trigger HCV entry. Inhibits host EIF2AK2/PKR activation, preventing the establishment of an antiviral state. Viral ligand for CD209/DC-SIGN and CLEC4M/DC-SIGNR, which are respectively found on dendritic cells (DCs), and on liver sinusoidal endothelial cells and macrophage-like cells of lymph node sinuses. These interactions allow the capture of circulating HCV particles by these cells and subsequent facilitated transmission to permissive cells such as hepatocytes and lymphocyte subpopulations. The protein is Genome polyprotein of Hepatitis C virus (isolate HC-J7) (HCV).